Here is a 249-residue protein sequence, read N- to C-terminus: 2,3-bisphosphoglycerate-dependent phosphoglycerate mutase (249 aa).

Residues 9–16 (RHGQSQWN), 22–23 (TG), R61, 88–91 (ERHY), K99, 115–116 (RR), and 184–185 (GN) each bind substrate. Catalysis depends on H10, which acts as the Tele-phosphohistidine intermediate. Catalysis depends on E88, which acts as the Proton donor/acceptor.

The protein belongs to the phosphoglycerate mutase family. BPG-dependent PGAM subfamily. As to quaternary structure, homodimer.

The catalysed reaction is (2R)-2-phosphoglycerate = (2R)-3-phosphoglycerate. It functions in the pathway carbohydrate degradation; glycolysis; pyruvate from D-glyceraldehyde 3-phosphate: step 3/5. Catalyzes the interconversion of 2-phosphoglycerate and 3-phosphoglycerate. The polypeptide is 2,3-bisphosphoglycerate-dependent phosphoglycerate mutase (Xanthomonas euvesicatoria pv. vesicatoria (strain 85-10) (Xanthomonas campestris pv. vesicatoria)).